We begin with the raw amino-acid sequence, 430 residues long: Serine--tRNA ligase (430 aa).

238–240 (TAE) serves as a coordination point for L-serine. Residue 269-271 (RRE) participates in ATP binding. Glu292 contributes to the L-serine binding site. 356–359 (EISS) serves as a coordination point for ATP. Ser392 lines the L-serine pocket.

It belongs to the class-II aminoacyl-tRNA synthetase family. Type-1 seryl-tRNA synthetase subfamily. Homodimer. The tRNA molecule binds across the dimer.

It is found in the cytoplasm. It carries out the reaction tRNA(Ser) + L-serine + ATP = L-seryl-tRNA(Ser) + AMP + diphosphate + H(+). The catalysed reaction is tRNA(Sec) + L-serine + ATP = L-seryl-tRNA(Sec) + AMP + diphosphate + H(+). It participates in aminoacyl-tRNA biosynthesis; selenocysteinyl-tRNA(Sec) biosynthesis; L-seryl-tRNA(Sec) from L-serine and tRNA(Sec): step 1/1. In terms of biological role, catalyzes the attachment of serine to tRNA(Ser). Is also able to aminoacylate tRNA(Sec) with serine, to form the misacylated tRNA L-seryl-tRNA(Sec), which will be further converted into selenocysteinyl-tRNA(Sec). This chain is Serine--tRNA ligase, found in Synechocystis sp. (strain ATCC 27184 / PCC 6803 / Kazusa).